The chain runs to 76 residues: U7-lycotoxin-Ls1c (76 aa).

The signal sequence occupies residues M1 to A22. Residues Q23 to G26 constitute a propeptide that is removed on maturation.

It belongs to the neurotoxin 19 (CSTX) family. 07 (U7-Lctx) subfamily. Post-translationally, contains 4 disulfide bonds. In terms of tissue distribution, expressed by the venom gland.

It is found in the secreted. This Lycosa singoriensis (Wolf spider) protein is U7-lycotoxin-Ls1c.